The chain runs to 191 residues: UPF0312 protein Sden_2128 (191 aa).

The first 22 residues, 1-22, serve as a signal peptide directing secretion; it reads MKKHLLASLLGASLLLPTAVNA.

The protein belongs to the UPF0312 family. Type 1 subfamily.

Its subcellular location is the periplasm. This is UPF0312 protein Sden_2128 from Shewanella denitrificans (strain OS217 / ATCC BAA-1090 / DSM 15013).